A 1136-amino-acid chain; its full sequence is Pesticidal crystal protein Cry4B protoxin (1136 aa).

The interval 84–282 (TPERVWNDFM…PADKIDNTKL (199 aa)) is domain I. The segment at 283 to 466 (SKTEFTREIY…SNRVSFAWTH (184 aa)) is domain II. Positions 467-641 (KIVDPNNQIY…PITQSVLDET (175 aa)) are domain III.

This sequence belongs to the delta endotoxin family. In terms of assembly, in the presence of micelles active toxin forms oligomers that can be fit into cryo-EM maps as trimers. Binds to host (A.gambiae) cadherin AgCad1 (also called BT-R3), probably on the cell surface. Activated toxin may bind its host AgCad1 receptor as a monomer, but also forms an oligomer that is not active. It depends on Mg(2+) as a cofactor. In terms of processing, treatment of recombinant protein with A.aegypti 3rd instar larvae midgut extract for 1 hour yields major bands of 72 and 45 kDa, the combined proteins are toxic to mosquitoes. Longer digestion, which removes the 72 kDa protein, yields a non-toxic preparation. Proteolysis by yields a 65 kDa toxic protein and 48 and 17 kDa fragments which are not toxic. In terms of tissue distribution, host (A.gambiae) larval midgut; binds to host brush border membranes, probably to cadherin-AgCad1 (Cad1, also called BT-R3).

It is found in the spore. Toxic activity on Trichoplusia ni insect cells stably transfected with the AgCad1/BT-R3 receptor leads to oncosis, cell death characterized by cell swelling, membrane blebbing and depletion of energy reserves. Cell death is blocked by EDTA (but not EGTA) and is partially prevented by pretreatment with NF449 (inhibits G-s-alpha-60A and adenylyl cyclase, AC) and 2',5'-dideoxyadenosine 3'-diphosphate (ddADP, inhibits AC), while H-89 and PKAI 14-22 (both inhibit protein kinase A), ouabain (inhibits Na+/K+-ATPase) and a cell exocytosis inhibitor (Exo1) nearly completely prevent the action of the toxin in this system. The cAMP analog pCPT-cAMP and the AC activator FSK enhance toxicity. A pesticidal protein active against Aedes and Anopheles mosquito species; activity on Culex species is strain dependent. It remains toxic to permethrin-resistant strains of A.gambiae. Following activation of the protoxin by mosquito larvae midgut extract (or by chymotrypsin or trypsin treatment) it becomes insecticidal. Causes mosquito cell death by activating a host G-protein-coupled receptor which subsequently activates adenylyl cyclase and increases cAMP production. cAMP activates protein kinase A which sets off a series of downstream events which includes increased exocytosis (probably bringing more receptor to the cell membrane), Na+/K+-ATPase activation and eventual host cell death. Another group suggests that alkaline phosphatase serves as the insect receptor and that the protein forms pores in insect cell membranes. This chain is Pesticidal crystal protein Cry4B protoxin, found in Bacillus thuringiensis subsp. israelensis.